Consider the following 131-residue polypeptide: MKKHGVLNSEIAAVLASLGHTDTIVIADCGLPIPDGVKRIDLAVEIGKPSFLDVLQVVADDMAIEKVTLAEEVIINNAEVNKEIEQKLIEPAFEYVSHEQFKAHTKKAKAIIRTGEATPYANVILHAGVIF.

The Proton donor role is filled by H20. Substrate-binding positions include D28, H98, and 120-122; that span reads YAN.

Belongs to the RbsD / FucU family. RbsD subfamily. As to quaternary structure, homodecamer.

The protein localises to the cytoplasm. The catalysed reaction is beta-D-ribopyranose = beta-D-ribofuranose. It participates in carbohydrate metabolism; D-ribose degradation; D-ribose 5-phosphate from beta-D-ribopyranose: step 1/2. Functionally, catalyzes the interconversion of beta-pyran and beta-furan forms of D-ribose. In Bacillus cereus (strain B4264), this protein is D-ribose pyranase.